We begin with the raw amino-acid sequence, 445 residues long: DNA polymerase IV (445 aa).

One can recognise a UmuC domain in the interval 49–229 (LAHVDCDAFY…KPVGMIWGVG (181 aa)). Residues Asp-53 and Asp-146 each contribute to the Mg(2+) site. Glu-147 is an active-site residue.

This sequence belongs to the DNA polymerase type-Y family. As to quaternary structure, monomer. Mg(2+) is required as a cofactor.

The protein localises to the cytoplasm. It carries out the reaction DNA(n) + a 2'-deoxyribonucleoside 5'-triphosphate = DNA(n+1) + diphosphate. Its function is as follows. Poorly processive, error-prone DNA polymerase involved in untargeted mutagenesis. Copies undamaged DNA at stalled replication forks, which arise in vivo from mismatched or misaligned primer ends. These misaligned primers can be extended by PolIV. Exhibits no 3'-5' exonuclease (proofreading) activity. May be involved in translesional synthesis, in conjunction with the beta clamp from PolIII. In Brucella melitensis biotype 1 (strain ATCC 23456 / CCUG 17765 / NCTC 10094 / 16M), this protein is DNA polymerase IV.